The sequence spans 115 residues: Large ribosomal subunit protein bL20 (115 aa).

It belongs to the bacterial ribosomal protein bL20 family.

Functionally, binds directly to 23S ribosomal RNA and is necessary for the in vitro assembly process of the 50S ribosomal subunit. It is not involved in the protein synthesizing functions of that subunit. This is Large ribosomal subunit protein bL20 (rplT) from Borreliella burgdorferi (strain ATCC 35210 / DSM 4680 / CIP 102532 / B31) (Borrelia burgdorferi).